Here is a 905-residue protein sequence, read N- to C-terminus: MLASLIGGIFGTKNERELKRMRKIVDQINALEPTISALSDADLSAKTPEFKERYNKGESLDKLLPEAFAVCREAAKRVMGMRHYDVQLIGGITLHEGKIAEMRTGEGKTLMGTLACYLNALSGQGVHVITVNDYLAQRDAELNRPLFEFLGLSIGIIYSMQSPTEKAEAYQADITYGTNNEFGFDYLRDNMVFSLQEKKQRGLNYAIIDEVDSILIDEARTPLIISGQSEDSSQLYAAINSIPPKLQPQKEEKVADGGHFWIDEKQRSVEMTEIGFETVEQELIQMGLLAEGESLYSATNLNLVHHVTAAIRAHFLYHRDVHYIIHNGEVIIVDEHTGRTMPGRRWSEGLHQAVEAKESLEIQPENQTLATTTFQNYFRLYKKLSGMTGTADTEAAEMKEIYGLDVVIIPTHRPMVRQDQNDLIYLNRNGKYDAIVKEIKNIQETRAPILVGTATIEASEILSHKLTQAGIRHEVLNAKQHEREADIIAQAGSPDSVTIATNMAGRGTDIILGGNWKAKLAKIENPTLEDEERLKAEWERDHETVLSAGGLHIIGSERHESRRIDNQLRGRAGRQGDPGVSRFYLSLEDDLMRIFAGDRVVGMMRAMGLKEDEAIEHKMVSRSIENAQRKVEARNFDIRKNLLKYDDVNNEQRKIIYSQRDEILAEHTLQDYIEEMHHEVMVGLIANFIPPESIHDQWDIEGLENALRVDLGIEVPVQQWLDEDRRLDEEALVQRITDEVLARYHARREQMGEESAAMLERHFMLNSLDRHWKDHLAAMDYLRQGIHLRGYAQKNPEQEYKKEAFNLFVNMLGVIKSDVVTDLSRIHVPTPEELAELEAQQQQQAEAMRLSFEHDEVDGLTGAVTHHEVEEQPIVSSDHIVPPSSRNAPCPCGSGLKYKQCHGRL.

ATP-binding positions include glutamine 87, glycine 105–threonine 109, and aspartate 509. Zn(2+) is bound by residues cysteine 890, cysteine 892, cysteine 901, and histidine 902.

It belongs to the SecA family. As to quaternary structure, monomer and homodimer. Part of the essential Sec protein translocation apparatus which comprises SecA, SecYEG and auxiliary proteins SecDF-YajC and YidC. Zn(2+) is required as a cofactor.

It is found in the cell inner membrane. It localises to the cytoplasm. The enzyme catalyses ATP + H2O + cellular proteinSide 1 = ADP + phosphate + cellular proteinSide 2.. In terms of biological role, part of the Sec protein translocase complex. Interacts with the SecYEG preprotein conducting channel. Has a central role in coupling the hydrolysis of ATP to the transfer of proteins into and across the cell membrane, serving both as a receptor for the preprotein-SecB complex and as an ATP-driven molecular motor driving the stepwise translocation of polypeptide chains across the membrane. This chain is Protein translocase subunit SecA, found in Acinetobacter baylyi (strain ATCC 33305 / BD413 / ADP1).